The chain runs to 166 residues: 6,7-dimethyl-8-ribityllumazine synthase (166 aa).

Residues Trp31, 63 to 65, and 85 to 87 each bind 5-amino-6-(D-ribitylamino)uracil; these read SFE and VII. 90–91 provides a ligand contact to (2S)-2-hydroxy-3-oxobutyl phosphate; sequence GT. His93 acts as the Proton donor in catalysis. Phe118 is a binding site for 5-amino-6-(D-ribitylamino)uracil. Arg132 is a binding site for (2S)-2-hydroxy-3-oxobutyl phosphate.

The protein belongs to the DMRL synthase family.

It carries out the reaction (2S)-2-hydroxy-3-oxobutyl phosphate + 5-amino-6-(D-ribitylamino)uracil = 6,7-dimethyl-8-(1-D-ribityl)lumazine + phosphate + 2 H2O + H(+). It participates in cofactor biosynthesis; riboflavin biosynthesis; riboflavin from 2-hydroxy-3-oxobutyl phosphate and 5-amino-6-(D-ribitylamino)uracil: step 1/2. Catalyzes the formation of 6,7-dimethyl-8-ribityllumazine by condensation of 5-amino-6-(D-ribitylamino)uracil with 3,4-dihydroxy-2-butanone 4-phosphate. This is the penultimate step in the biosynthesis of riboflavin. In Cutibacterium acnes (strain DSM 16379 / KPA171202) (Propionibacterium acnes), this protein is 6,7-dimethyl-8-ribityllumazine synthase.